Here is a 283-residue protein sequence, read N- to C-terminus: Putative cuticle collagen 79 (283 aa).

The segment at 59–283 (FKQQSSPPSP…ARSISKVAIQ (225 aa)) is disordered. Triple-helical region regions lie at residues 94-122 (GPPG…ENGG), 139-201 (GPRG…PGRK), and 204-269 (GEAG…DGAY). Over residues 137 to 146 (PPGPRGPPGP) the composition is skewed to pro residues. The span at 226–240 (TDGDDGVDGQPGDEG) shows a compositional bias: acidic residues. A compositionally biased stretch (low complexity) spans 253–265 (PQGEQGTEGQPGT).

This sequence belongs to the cuticular collagen family. Collagen polypeptide chains are complexed within the cuticle by disulfide bonds and other types of covalent cross-links.

Its function is as follows. Nematode cuticles are composed largely of collagen-like proteins. The cuticle functions both as an exoskeleton and as a barrier to protect the worm from its environment. The protein is Putative cuticle collagen 79 (col-79) of Caenorhabditis elegans.